We begin with the raw amino-acid sequence, 795 residues long: Plakophilin-2 (795 aa).

The interval 1–318 (MAVPGSLAEC…MTLERAVNML (318 aa)) is required for binding to single-stranded DNA. A Phosphoserine modification is found at Ser-44. Arg-46 carries the post-translational modification Omega-N-methylarginine. Ser-82, Ser-132, Ser-135, Ser-151, Ser-154, Ser-155, Ser-172, Ser-188, and Ser-232 each carry phosphoserine. Disordered stretches follow at residues 197-233 (GTARRPPGCGSFSDAVFDNGPLKPTMPTHPPGTSHSA) and 245-274 (SQARLQSTQSRTARSSWPRSSVRSSLREPG). Residues 245–257 (SQARLQSTQSRTA) are compositionally biased toward polar residues. Positions 258–268 (RSSWPRSSVRS) are enriched in low complexity. Phosphoserine is present on residues Ser-265 and Ser-287. 8 ARM repeats span residues 299–339 (DAQL…QHES), 343–382 (SEARKRVNQLRGIPKLLQLLKLQNEDVQRAACGALRNLVF), 385–425 (NDNK…NLSS), 484–530 (PDGR…NLSY), 585–625 (PHGI…NLTA), 633–672 (LVARMVVQKENGLQHTRKMLHVGDPSVKKTAVSLLRNLSR), 677–718 (QNEI…NLMQ), and 721–763 (YQNA…SLWA).

Belongs to the beta-catenin family. As to quaternary structure, interacts with DSC2. Interacts with JUP. Interacts with KRT5/CK5, KRT8/CK8, KRT14/CK14, KRT18/CK18 and VIM. Interacts (via N-terminus) with MARK3/C-TAK1. Interacts with DSP. Interacts with DSG1, DSG2 and DSG3. Interacts (via N-terminus) with CTNNB1. Interacts with CDH1. Interacts with the RNA polymerase III (Pol III) complex proteins POLR3A/RPC155, POLR3F/RPC39 and POLR3C/RPC82. Interacts with CTNNA3. Interacts (via N-terminus) with SCN5A/Nav1.5. Interacts with ANK3/ANKG and GJA1/CX43. In terms of tissue distribution, expressed in cardiomyocytes in the heart (at protein level).

It is found in the nucleus. The protein localises to the cell junction. It localises to the desmosome. The protein resides in the cytoplasm. A component of desmosome cell-cell junctions which are required for positive regulation of cellular adhesion. Regulates focal adhesion turnover resulting in changes in focal adhesion size, cell adhesion and cell spreading, potentially via transcriptional modulation of beta-integrins. Required to maintain gingival epithelial barrier function. Important component of the desmosome that is also required for localization of desmosome component proteins such as DSC2, DSG2 and JUP to the desmosome cell-cell junction. Required for the formation of desmosome cell junctions in cardiomyocytes, thereby required for the correct formation of the heart, specifically trabeculation and formation of the atria walls. Loss of desmosome cell junctions leads to mis-localization of DSP and DSG2 resulting in disruption of cell-cell adhesion and disordered intermediate filaments. Modulates profibrotic gene expression in cardiomyocytes via regulation of DSP expression and subsequent activation of downstream TGFB1 and MAPK14/p38 MAPK signaling. Required for cardiac sodium current propagation and electrical synchrony in cardiac myocytes, via ANK3 stabilization and modulation of SCN5A/Nav1.5 localization to cell-cell junctions. Required for mitochondrial function, nuclear envelope integrity and positive regulation of SIRT3 transcription via maintaining DES localization at its nuclear envelope and cell tip anchoring points, and thereby preserving regulation of the transcriptional program. Maintenance of nuclear envelope integrity protects against DNA damage and transcriptional dysregulation of genes, especially those involved in the electron transport chain, thereby preserving mitochondrial function and protecting against superoxide radical anion generation. Binds single-stranded DNA (ssDNA). May regulate the localization of GJA1 to gap junctions in intercalated disks of the heart. This is Plakophilin-2 from Mus musculus (Mouse).